The following is a 437-amino-acid chain: O-antigen export system ATP-binding protein RfbB (437 aa).

The 220-residue stretch at 37-256 folds into the ABC transporter domain; it reads LRGKRQSRDA…YREAISLAEA (220 aa). Residue 69 to 76 coordinates ATP; the sequence is GRNGSGKS.

This sequence belongs to the ABC transporter superfamily.

It is found in the cell inner membrane. Functionally, may form an ATP-driven O-antigen export apparatus, in association with RfbA. In Myxococcus xanthus, this protein is O-antigen export system ATP-binding protein RfbB (rfbB).